Here is a 178-residue protein sequence, read N- to C-terminus: Hypoxanthine-guanine phosphoribosyltransferase (178 aa).

Residues Lys46 and Gly47 each contribute to the diphosphate site. Asp103 is a Mg(2+) binding site. The active-site Proton acceptor is Asp106. GMP contacts are provided by residues Lys134, 155 to 156, and Asp162; that span reads FL. Arg168 contributes to the diphosphate binding site.

The protein belongs to the purine/pyrimidine phosphoribosyltransferase family. Requires Mg(2+) as cofactor.

The protein localises to the cytoplasm. The catalysed reaction is IMP + diphosphate = hypoxanthine + 5-phospho-alpha-D-ribose 1-diphosphate. The enzyme catalyses GMP + diphosphate = guanine + 5-phospho-alpha-D-ribose 1-diphosphate. The protein operates within purine metabolism; IMP biosynthesis via salvage pathway; IMP from hypoxanthine: step 1/1. Its pathway is purine metabolism; GMP biosynthesis via salvage pathway; GMP from guanine: step 1/1. Purine salvage pathway enzyme that catalyzes the transfer of the ribosyl-5-phosphate group from 5-phospho-alpha-D-ribose 1-diphosphate (PRPP) to the N9 position of the 6-oxopurines hypoxanthine and guanine to form the corresponding ribonucleotides IMP (inosine 5'-monophosphate) and GMP (guanosine 5'-monophosphate), with the release of PPi. This chain is Hypoxanthine-guanine phosphoribosyltransferase (hpt), found in Aquifex aeolicus (strain VF5).